Reading from the N-terminus, the 418-residue chain is Bile acid-CoA:amino acid N-acyltransferase (418 aa).

Ser125 is modified (phosphoserine). Residues Cys235, Asp328, and His362 each act as charge relay system in the active site. Position 416 is a phosphoserine (Ser416).

This sequence belongs to the C/M/P thioester hydrolase family. Monomer. Expressed in the gallbladder mucosa and pancreas. Expressed in hepatocytes (at protein level).

Its subcellular location is the cytoplasm. The protein resides in the cytosol. It localises to the peroxisome. The catalysed reaction is choloyl-CoA + glycine = glycocholate + CoA + H(+). It carries out the reaction hexadecanoyl-CoA + H2O = hexadecanoate + CoA + H(+). The enzyme catalyses choloyl-CoA + H2O = cholate + CoA + H(+). It catalyses the reaction chenodeoxycholoyl-CoA + H2O = chenodeoxycholate + CoA + H(+). The catalysed reaction is eicosanoyl-CoA + H2O = eicosanoate + CoA + H(+). It carries out the reaction octadecanoyl-CoA + H2O = octadecanoate + CoA + H(+). The enzyme catalyses docosanoyl-CoA + H2O = docosanoate + CoA + H(+). It catalyses the reaction tetracosanoyl-CoA + H2O = tetracosanoate + CoA + H(+). The catalysed reaction is hexacosanoyl-CoA + H2O = hexacosanoate + CoA + H(+). It carries out the reaction dodecanoyl-CoA + H2O = dodecanoate + CoA + H(+). The enzyme catalyses tetradecanoyl-CoA + H2O = tetradecanoate + CoA + H(+). It catalyses the reaction choloyl-CoA + taurine = taurocholate + CoA + H(+). The catalysed reaction is chenodeoxycholoyl-CoA + glycine = glycochenodeoxycholate + CoA + H(+). It carries out the reaction chenodeoxycholoyl-CoA + taurine = taurochenodeoxycholate + CoA + H(+). The enzyme catalyses eicosanoyl-CoA + glycine = N-eicosanoylglycinate + CoA + H(+). It catalyses the reaction hexacosanoyl-CoA + glycine = N-hexacosanoylglycine + CoA + H(+). The catalysed reaction is docosanoyl-CoA + glycine = N-docosanoylglycine + CoA + H(+). In terms of biological role, catalyzes the amidation of bile acids (BAs) with the amino acids taurine and glycine. More than 95% of the BAs are N-acyl amidates with glycine and taurine. Amidation of BAs in the liver with glycine or taurine prior to their excretion into bile is an important biochemical event in bile acid metabolism. This conjugation (or amidation) plays several important biological roles in that it promotes the secretion of BAs and cholesterol into bile and increases the detergent properties of BAs in the intestine, which facilitates lipid and vitamin absorption. May also act as an acyl-CoA thioesterase that regulates intracellular levels of free fatty acids. In vitro, catalyzes the hydrolysis of long- and very long-chain saturated acyl-CoAs to the free fatty acid and coenzyme A (CoASH), and conjugates glycine to these acyl-CoAs. The sequence is that of Bile acid-CoA:amino acid N-acyltransferase (BAAT) from Homo sapiens (Human).